The primary structure comprises 180 residues: MTKPVYSKTPSNPEKSCKSRGSNLRIHFKNTRESAMAIKGMLLTRAKAYLNNVLAHRECIPFRRFKGGVGRTGQAKIFGTSQGRWPKKSVEHILSLLQNAEANAEAKGLNVEKLKIAHVQVQRAQQQRRRTYRAHGRINPYMCSPSTVEFILTEVEKAVPKPAEESAQKKKSVATQEISA.

Disordered stretches follow at residues 1-20 (MTKP…CKSR) and 160-180 (PKPA…EISA). The segment covering 8–20 (KTPSNPEKSCKSR) has biased composition (polar residues).

This sequence belongs to the universal ribosomal protein uL22 family.

The protein is Large ribosomal subunit protein uL22 (rpl17) of Dictyostelium discoideum (Social amoeba).